We begin with the raw amino-acid sequence, 500 residues long: ATP synthase subunit alpha (500 aa).

169-176 (GDRQTGKT) provides a ligand contact to ATP.

This sequence belongs to the ATPase alpha/beta chains family. In terms of assembly, F-type ATPases have 2 components, CF(1) - the catalytic core - and CF(0) - the membrane proton channel. CF(1) has five subunits: alpha(3), beta(3), gamma(1), delta(1), epsilon(1). CF(0) has three main subunits: a(1), b(2) and c(9-12). The alpha and beta chains form an alternating ring which encloses part of the gamma chain. CF(1) is attached to CF(0) by a central stalk formed by the gamma and epsilon chains, while a peripheral stalk is formed by the delta and b chains.

Its subcellular location is the cell membrane. The catalysed reaction is ATP + H2O + 4 H(+)(in) = ADP + phosphate + 5 H(+)(out). Produces ATP from ADP in the presence of a proton gradient across the membrane. The alpha chain is a regulatory subunit. In Lactococcus lactis subsp. lactis (strain IL1403) (Streptococcus lactis), this protein is ATP synthase subunit alpha.